Consider the following 317-residue polypeptide: MNIKKAIERVPGGMMVVPLVIGAVINTFAPQALEIGGFTTALFKNGAAPLIGAFLLCMGAGISVKAAPQALLQGGTITLTKLLVAIGIGLGVEHLFGAEGIFGLSGVAIIAAMSNSNGGLYAALVGEFGNERDVGAISILSLNDGPFFTMIALGAAGMANIPIMALVAVLVPLVVGMILGNLDPHMRDFLTKGGPLLIPFFAFALGAGINLEMLLQGGLAGILLGVLTTFVGGFFNIRADRLVGGTGIAGAAASSTAGNAVATPLAIAQADPSLAEVAAAAAPLIAASVITTAILTPVLTSWVAKKQARQASLEKNA.

A run of 10 helical transmembrane segments spans residues 10–30 (VPGGMMVVPLVIGAVINTFAP), 47–67 (AAPLIGAFLLCMGAGISVKAA), 82–102 (LLVAIGIGLGVEHLFGAEGIF), 106–126 (GVAIIAAMSNSNGGLYAALVG), 134–154 (VGAISILSLNDGPFFTMIALG), 159–179 (ANIPIMALVAVLVPLVVGMIL), 195–215 (PLLIPFFAFALGAGINLEMLL), 217–237 (GGLAGILLGVLTTFVGGFFNI), 248–268 (IAGAAASSTAGNAVATPLAIA), and 279–299 (AAAAPLIAASVITTAILTPVL).

Belongs to the KdgT transporter family.

Its subcellular location is the cell inner membrane. It catalyses the reaction 2-dehydro-3-deoxy-D-gluconate(in) + H(+)(in) = 2-dehydro-3-deoxy-D-gluconate(out) + H(+)(out). Its function is as follows. Catalyzes the proton-dependent uptake of 2-keto-3-deoxygluconate (KDG) into the cell. The protein is 2-keto-3-deoxygluconate permease 1 of Salmonella typhi.